The primary structure comprises 511 residues: Thioredoxin reductase 2, mitochondrial (511 aa).

A mitochondrion-targeting transit peptide spans 1 to 21; the sequence is MAALRGAAARFRGRAPGGARG. 29–58 is a binding site for FAD; the sequence is DLLVIGGGSGGLACAKEAAQLGKKVAVLDY. A disulfide bridge links Cys-74 with Cys-79. Lys-316 bears the N6-succinyllysine mark. Catalysis depends on His-484, which acts as the Proton acceptor. Positions 509 to 510 form a cross-link, cysteinyl-selenocysteine (Cys-Sec); that stretch reads CU. Sec-510 is a non-standard amino acid (selenocysteine).

Belongs to the class-I pyridine nucleotide-disulfide oxidoreductase family. As to quaternary structure, homodimer. FAD serves as cofactor.

It is found in the mitochondrion. It catalyses the reaction [thioredoxin]-dithiol + NADP(+) = [thioredoxin]-disulfide + NADPH + H(+). Its activity is regulated as follows. Inhibited by 1-chloro-2,4-dinitrobenzene and by zinc, calcium, magnesium and Fe(2+) ions. Its function is as follows. Involved in the control of reactive oxygen species levels and the regulation of mitochondrial redox homeostasis. Maintains thioredoxin in a reduced state. May play a role in redox-regulated cell signaling. The chain is Thioredoxin reductase 2, mitochondrial (TXNRD2) from Bos taurus (Bovine).